Consider the following 186-residue polypeptide: Ribosome-recycling factor (186 aa).

It belongs to the RRF family.

The protein localises to the cytoplasm. Responsible for the release of ribosomes from messenger RNA at the termination of protein biosynthesis. May increase the efficiency of translation by recycling ribosomes from one round of translation to another. This chain is Ribosome-recycling factor, found in Leptothrix cholodnii (strain ATCC 51168 / LMG 8142 / SP-6) (Leptothrix discophora (strain SP-6)).